The sequence spans 280 residues: uncharacterized protein (280 aa).

This sequence belongs to the eukaryotic-type primase small subunit family.

This is an uncharacterized protein from Archaeoglobus fulgidus (strain ATCC 49558 / DSM 4304 / JCM 9628 / NBRC 100126 / VC-16).